The following is a 452-amino-acid chain: Bifunctional protein GlmU (452 aa).

A pyrophosphorylase region spans residues 1-224 (MNIVILAAGQ…EWEVLGVNSK (224 aa)). UDP-N-acetyl-alpha-D-glucosamine contacts are provided by residues 6–9 (LAAG), Lys-20, Gln-71, 76–77 (GT), 98–100 (YGD), Gly-134, Glu-149, Asn-164, and Asn-222. Residue Asp-100 coordinates Mg(2+). Residue Asn-222 participates in Mg(2+) binding. Positions 225 to 245 (VQLAELERQHQLNLAGELLVA) are linker. The tract at residues 246–452 (GVRLADPARI…GWERPKKVKK (207 aa)) is N-acetyltransferase. Residues Arg-328 and Lys-346 each contribute to the UDP-N-acetyl-alpha-D-glucosamine site. His-358 serves as the catalytic Proton acceptor. UDP-N-acetyl-alpha-D-glucosamine-binding residues include Tyr-361 and Asn-372. Residues Ala-375, 381-382 (NY), Ser-400, Ala-418, and Arg-435 each bind acetyl-CoA.

The protein in the N-terminal section; belongs to the N-acetylglucosamine-1-phosphate uridyltransferase family. In the C-terminal section; belongs to the transferase hexapeptide repeat family. As to quaternary structure, homotrimer. The cofactor is Mg(2+).

It localises to the cytoplasm. The catalysed reaction is alpha-D-glucosamine 1-phosphate + acetyl-CoA = N-acetyl-alpha-D-glucosamine 1-phosphate + CoA + H(+). The enzyme catalyses N-acetyl-alpha-D-glucosamine 1-phosphate + UTP + H(+) = UDP-N-acetyl-alpha-D-glucosamine + diphosphate. Its pathway is nucleotide-sugar biosynthesis; UDP-N-acetyl-alpha-D-glucosamine biosynthesis; N-acetyl-alpha-D-glucosamine 1-phosphate from alpha-D-glucosamine 6-phosphate (route II): step 2/2. It participates in nucleotide-sugar biosynthesis; UDP-N-acetyl-alpha-D-glucosamine biosynthesis; UDP-N-acetyl-alpha-D-glucosamine from N-acetyl-alpha-D-glucosamine 1-phosphate: step 1/1. The protein operates within bacterial outer membrane biogenesis; LPS lipid A biosynthesis. In terms of biological role, catalyzes the last two sequential reactions in the de novo biosynthetic pathway for UDP-N-acetylglucosamine (UDP-GlcNAc). The C-terminal domain catalyzes the transfer of acetyl group from acetyl coenzyme A to glucosamine-1-phosphate (GlcN-1-P) to produce N-acetylglucosamine-1-phosphate (GlcNAc-1-P), which is converted into UDP-GlcNAc by the transfer of uridine 5-monophosphate (from uridine 5-triphosphate), a reaction catalyzed by the N-terminal domain. This chain is Bifunctional protein GlmU, found in Dechloromonas aromatica (strain RCB).